The following is a 335-amino-acid chain: ADP-L-glycero-D-manno-heptose-6-epimerase (335 aa).

NADP(+) is bound by residues 11-12, 32-33, Lys-39, 75-79, and Asn-92; these read FI, DD, and EGACS. Tyr-139 acts as the Proton acceptor in catalysis. Residue Lys-143 participates in NADP(+) binding. Asn-172 is a binding site for substrate. NADP(+) is bound by residues Val-173 and Lys-181. The active-site Proton acceptor is Lys-181. Substrate is bound by residues Arg-183, His-190, 204–207, Arg-217, and Tyr-296; that span reads FGDY.

Belongs to the NAD(P)-dependent epimerase/dehydratase family. HldD subfamily. As to quaternary structure, homopentamer. NADP(+) serves as cofactor.

The enzyme catalyses ADP-D-glycero-beta-D-manno-heptose = ADP-L-glycero-beta-D-manno-heptose. It participates in nucleotide-sugar biosynthesis; ADP-L-glycero-beta-D-manno-heptose biosynthesis; ADP-L-glycero-beta-D-manno-heptose from D-glycero-beta-D-manno-heptose 7-phosphate: step 4/4. Functionally, catalyzes the interconversion between ADP-D-glycero-beta-D-manno-heptose and ADP-L-glycero-beta-D-manno-heptose via an epimerization at carbon 6 of the heptose. In Polaromonas naphthalenivorans (strain CJ2), this protein is ADP-L-glycero-D-manno-heptose-6-epimerase.